The primary structure comprises 355 residues: UPF0421 protein BALH_2468 (355 aa).

A run of 4 helical transmembrane segments spans residues 19-39 (IAVFLTVLVCEFFNIPTIFAV), 74-94 (FTFFLGHQALSYALAAMFTIV), 109-129 (TLTAVAMIPITADHYFTAFLI), and 131-151 (LATTSTGIIVSTVVNFFILPP).

It belongs to the UPF0421 family.

It localises to the cell membrane. The chain is UPF0421 protein BALH_2468 from Bacillus thuringiensis (strain Al Hakam).